Reading from the N-terminus, the 139-residue chain is MNFKTALICFALLLIGTLCSAYSNQERQRDSRRVAEIMRTSLDDNTKIHRIQELLTIYNRMAPSLRPDERARIDRFISRHTEGIMVDGVPSQGGARKIFKKTLSPAAKSVATGFFTELGASLASLFTSWFPATTTERNH.

Residues 1–21 (MNFKTALICFALLLIGTLCSA) form the signal peptide.

Belongs to the Turandot family.

The protein resides in the secreted. In terms of biological role, a humoral factor that may play a role in stress tolerance. In Drosophila simulans (Fruit fly), this protein is Protein Turandot B.